Reading from the N-terminus, the 324-residue chain is T-cell acute lymphocytic leukemia protein 1 homolog (324 aa).

The interval 1–49 is disordered; it reads MMEKLKSEQFPLSPSAEGCASPPRGDGDARGKQEGTTAETGEHRLPEEL. The bHLH domain occupies 185 to 237; the sequence is VRRIFTNSRERWRQQNVNGAFAELRKLIPTHPPDKKLSKNEILRLAMKYINFL. The disordered stretch occupies residues 276-324; that stretch reads SPNSSCGSLLDGDASPESFTEDQDSSVESRPSARGLHHSSLPLDGNAQR.

As to expression, expressed in hemopoietic and endothelial lineages. Isoform beta emerges first, expressing in the entire anterior and posterior lateral mesoderm (ALM and PLM respectively), and in the ventral wall of the dorsal aorta, where definitive hemopoiesis begins. Isoform alpha expresses later as two pairs of stripes in the PLM and ALM, and becomes restricted to the intermediate cell mass (ICM) by the 18-somite stage. The ICM is the key site of primitive hemopoiesis, giving rise to the erythroid lineage. Also expressed in all stages of endocardial cell migration and in the developing midbrain, hindbrain and spinal cord. In adults, expressed in the main hemopoietic organs, namely the kidney (where isoform alpha is the predominant isoform) and the spleen. Also expressed in the liver, gill and gonads.

It is found in the nucleus. Functionally, transcription factor that plays a pivotal role in hemopoietic and endothelial development, acting synergistically with lmo2 and downstream of clo. Specifies mesodermal precursors to a hemangioblast cell fate. Hemangioblasts are bipotential precursors of blood and endothelium, and in the absence of hemopoietic induction cues such as gata1, tal1/scl-lmo2-induced hemangioblasts differentiate into endothelial cells. Isoform alpha and isoform beta are redundant for the initiation of primitive hemopoiesis but have distinct roles in the regulation of primitive erythroid differentiation and definitive hemopoietic stem cell specification, most likely due to differences in expression levels. Specification of definitive hemopoietic stem cells requires isoform beta. DNA binding is required for erythroid maturation, but not for its other hemopoietic functions. Endothelial roles include development of the dorsal aorta, the site of definitive hemopoiesis in the embryo. Required for angiogenesis but not angioblast specification. Has an additional role in endocardium formation during heart development. May play a role in central nervous system development. The protein is T-cell acute lymphocytic leukemia protein 1 homolog of Danio rerio (Zebrafish).